The chain runs to 173 residues: Photosystem I assembly protein Ycf3 (173 aa).

TPR repeat units lie at residues 35-68, 72-105, and 120-153; these read AYIY…EENK, GETL…NPKQ, and GRYA…YPGG.

Belongs to the Ycf3 family.

It localises to the cellular thylakoid membrane. Its function is as follows. Essential for the assembly of the photosystem I (PSI) complex. May act as a chaperone-like factor to guide the assembly of the PSI subunits. The polypeptide is Photosystem I assembly protein Ycf3 (Prochlorococcus marinus (strain MIT 9215)).